The sequence spans 284 residues: MKDSHQTIGVFVRPTHYQNPLFEKLERAKEWVLKLLEDEGFESFMIDGLDGAKDERLIEKAYAFLCLGGDGTILGALRMTHSYNKPCFGVRIGNLGFLSAVELNGLKGFLQDLKQDKIKLEEHLALEGRIGKTSFYAINEIVIAKKKALGVLDIQAYVGHTPFNTYKGDGLIIATPLGSTAYNLSAHGPIVHALSQSYILTPLCDFSLTQRPLVLGAEFCLNFCAHEDALVVIDGQATYDLKANQPLYIQKSPTTTKLLQKNSRDYFKVLKEKLLWGESPSKKR.

Catalysis depends on D70, which acts as the Proton acceptor. Residues 70–71, 139–140, K167, D169, L177, 180–185, and Q236 each bind NAD(+); these read DG, NE, and TAYNLS.

This sequence belongs to the NAD kinase family. A divalent metal cation is required as a cofactor.

It localises to the cytoplasm. It carries out the reaction NAD(+) + ATP = ADP + NADP(+) + H(+). Its function is as follows. Involved in the regulation of the intracellular balance of NAD and NADP, and is a key enzyme in the biosynthesis of NADP. Catalyzes specifically the phosphorylation on 2'-hydroxyl of the adenosine moiety of NAD to yield NADP. The protein is NAD kinase of Helicobacter pylori (strain Shi470).